A 1261-amino-acid polypeptide reads, in one-letter code: ABC-type transmembrane transporter verA (1261 aa).

Residues 41-61 (IGCAFAAVCSGAAMPLMALIL) form a helical membrane-spanning segment. In terms of domain architecture, ABC transmembrane type-1 1 spans 41 to 334 (IGCAFAAVCS…LGPNMPSFIK (294 aa)). Residue Asn-67 is glycosylated (N-linked (GlcNAc...) asparagine). The next 5 helical transmembrane spans lie at 92–112 (LWFV…SFGF), 166–186 (LGIM…AFSQ), 190–210 (LTLV…FIVS), 270–290 (FVGL…AIGF), and 308–328 (ILSV…LGPN). Residues 374–618 (VELRDMSFAY…GGLYKRLYDA (245 aa)) form the ABC transporter 1 domain. Residue Asn-396 is glycosylated (N-linked (GlcNAc...) asparagine). 409–416 (GPSGAGKS) lines the ATP pocket. An N-linked (GlcNAc...) asparagine glycan is attached at Asn-463. 6 helical membrane passes run 686 to 706 (YWPI…IFPV), 734 to 754 (LMFF…GFFM), 808 to 828 (MGLL…GLAY), 830 to 850 (WKFA…AGYL), 913 to 933 (VMTL…ALGF), and 950 to 970 (FFTV…LFGF). One can recognise an ABC transmembrane type-1 2 domain in the interval 691–976 (LIGLVACVVT…LFGFSSNLGK (286 aa)). Residues Asn-1007 and Asn-1021 are each glycosylated (N-linked (GlcNAc...) asparagine). One can recognise an ABC transporter 2 domain in the interval 1017–1255 (VDMQNVTFAY…QGNYFKMHES (239 aa)). 1052–1059 (GTSGSGKS) contributes to the ATP binding site. Asn-1106 carries N-linked (GlcNAc...) asparagine glycosylation.

The protein belongs to the ABC transporter superfamily. ABCB family. Multidrug resistance exporter (TC 3.A.1.201) subfamily.

It localises to the cell membrane. In terms of biological role, ABC-type transmembrane transporter; part of the gene cluster that mediates the biosynthesis of 11'-deoxyverticillin A, one of the dimeric epipolythiodioxopiperazines (ETPs) from the verticillin family that are toxic secondary metabolites. The verA multidrug transporter is probably involved in the secretion of 11'-deoxyverticillin A. The chain is ABC-type transmembrane transporter verA from Clonostachys rogersoniana.